Here is a 490-residue protein sequence, read N- to C-terminus: 5'-3' exonuclease PLD3 (490 aa).

The Cytoplasmic portion of the chain corresponds to 1 to 38 (MKPKLMYQELKVPAEEPANELPMNEIEAWKAAEKKARW). Residues 39-59 (VLLVLILAVVGFGALMTQLFL) traverse the membrane as a helical; Signal-anchor for type II membrane protein segment. Topologically, residues 60-490 (WEYGDLHLFG…DSVGNACRLL (431 aa)) are lumenal. 2 disulfide bridges follow: cysteine 77–cysteine 239 and cysteine 81–cysteine 237. Residues asparagine 97 and asparagine 132 are each glycosylated (N-linked (GlcNAc...) asparagine). The region spanning 196–223 (THGVLHTKFWVVDQTHFYLGSANMDWRS) is the PLD phosphodiesterase 1 domain. Residues histidine 201, lysine 203, and aspartate 208 contribute to the active site. The active-site Proton donor is the histidine 201. Residues histidine 201 and lysine 203 each coordinate phosphate. Asparagine 218 provides a ligand contact to phosphate. N-linked (GlcNAc...) asparagine glycosylation is found at asparagine 236, asparagine 284, and asparagine 387. The cysteines at positions 366 and 487 are disulfide-linked. A PLD phosphodiesterase 2 domain is found at 411–437 (YARVNHNKYMVTERATYIGTSNWSGNY). Histidine 416 is a binding site for phosphate. The active-site Nucleophile is the histidine 416. Phenylalanine 438 is a binding site for Mg(2+).

It belongs to the phospholipase D family. In terms of assembly, homodimer. Interacts with APP. N-glycosylated. In terms of processing, proteolytically processed to a soluble form that is stable within endosomes and lysosomes. During transport through the secretory pathway becomes proteolysed by cysteine proteases, thereby releasing a stable soluble lysosomal lumenal polypeptide, whereas the transmembrane-bound fragment is rapidly degraded. Its transport route to lysosomes involves ubiquitination and the ESCRT complex. Post-translationally, ubiquitinated. Ubiquitination mediates sorting into lysosomes.

The protein localises to the endoplasmic reticulum membrane. It localises to the lysosome lumen. The protein resides in the early endosome membrane. It is found in the late endosome membrane. Its subcellular location is the golgi apparatus membrane. The protein localises to the endosome membrane. The catalysed reaction is Exonucleolytic cleavage in the 5'- to 3'-direction to yield nucleoside 3'-phosphates.. It catalyses the reaction a 5'-end 5'-dephospho-ribonucleotidyl-ribonucleotide-RNA + H2O = a ribonucleoside 3'-phosphate + a 5'-end dephospho-ribonucleoside-RNA + H(+). The enzyme catalyses a ribonucleoside 3'-phosphate-2'-3'-cyclophospho-GMP + H2O = a ribonucleoside 3'-phosphate + 2',3'-cyclophospho-GMP + H(+). It carries out the reaction a 5'-end 5'-dephospho-2'-deoxyribonucleotidyl-2'-deoxyribonucleotide in single-stranded DNA + H2O = a 5'-end dephospho-2'-deoxyribonucleoside in single-stranded DNA + a 2'-deoxyribonucleoside 3'-phosphate + H(+). The catalysed reaction is a 5'-end 5'-phospho-2'-deoxyribonucleotide in single-stranded DNA + H2O = a 5'-end 5'-dephospho-2'-deoxyribonucleotide in single-stranded DNA + phosphate. It catalyses the reaction a 3-lyso-sn-glycero-1-phospho-(3'-acyl-1'-sn-glycerol) + a 1-acyl-sn-glycerol = a 3-acyl-sn-glycero-1-phospho-(3'-acyl-1'-sn-glycerol) + glycerol. The enzyme catalyses 3-lyso-sn-glycero-1-phospho-(3'-(9Z-octadecenoyl)-1'-sn-glycerol) + 1-(9Z-octadecenoyl)-sn-glycerol = 3-(9Z-octadecenoyl)-sn-glycero-1-phospho-(3'-(9Z-octadecenoyl)-1'-sn-glycerol) + glycerol. In terms of biological role, 5'-&gt;3' exonuclease that hydrolyzes the phosphodiester bond of single-stranded DNA (ssDNA) and RNA molecules to form nucleoside 3'-monophosphates and 5'-end 5'-hydroxy deoxyribonucleotide/ribonucleotide fragments. Partially redundant with PLD4, can cleave all four nucleotides displaying higher efficiency for ssDNA and RNA fragments initiated with uridine and guanosine residues and lower efficiency for cytidine-initiated substrates. As a result, it does not always degrade polynucleotides to the single nucleotide level, it can stall at specific sites sparing certain fragments from exonucleolytic degradation. Processes self and pathogenic ssDNA and RNA molecules that reach the endolysosomal compartment via phagocytosis or autophagy and may serve as 'danger' signals for recognition by innate immune receptors such as toll-like receptors (TLRs). Degrades mitochondrial CpG-rich ssDNA fragments to prevent TLR9 activation and autoinflammatory response, but it can cleave viral RNA to generate ligands for TLR7 activation and initiate antiviral immune responses. In plasmacytoid dendritic cells, it cooperates with endonuclease RNASET2 to release 2',3'-cyclic guanosine monophosphate (2',3'-cGMP), a potent stimulatory ligand for TLR7. Produces 2',3'-cGMPs and cytidine-rich RNA fragments that occupy TLR7 ligand-binding pockets and trigger a signaling-competent state. Can exert polynucleotide phosphatase activity toward 5'-phosphorylated ssDNA substrates although at a slow rate. Transphosphatidylase that catalyzes the exchange with R to S stereo-inversion of the glycerol moiety between (S,R)-lysophosphatidylglycerol (LPG) and monoacylglycerol (MAG) substrates to yield (S,S)-bis(monoacylglycero)phosphate (BMP). Can synthesize a variety of (S,S)-BMPs representing the main phospholipid constituent of lysosomal intralumenal vesicle (ILV) membranes that bind acid hydrolases for lipid degradation. Regulates the homeostasis and interorganellar communication of the endolysosomal system with an overall impact on cellular removal of dysfunctional organelles via autophagy as well as proper protein and lipid turnover. May play a role in myotube formation in response to ER stress. In Macaca fascicularis (Crab-eating macaque), this protein is 5'-3' exonuclease PLD3 (PLD3).